Consider the following 299-residue polypeptide: NAD kinase (299 aa).

D78 (proton acceptor) is an active-site residue. NAD(+) contacts are provided by residues D78 to G79, N151 to D152, K162, R179, D181, T192 to S197, and Q252.

It belongs to the NAD kinase family. A divalent metal cation serves as cofactor.

It localises to the cytoplasm. It catalyses the reaction NAD(+) + ATP = ADP + NADP(+) + H(+). In terms of biological role, involved in the regulation of the intracellular balance of NAD and NADP, and is a key enzyme in the biosynthesis of NADP. Catalyzes specifically the phosphorylation on 2'-hydroxyl of the adenosine moiety of NAD to yield NADP. The polypeptide is NAD kinase (Coxiella burnetii (strain CbuG_Q212) (Coxiella burnetii (strain Q212))).